The primary structure comprises 734 residues: Photosystem I P700 chlorophyll a apoprotein A2 (734 aa).

Helical transmembrane passes span Ile46–Ala69, Leu135–Gln158, Leu175–Ile199, Met273–Tyr291, Leu330–Tyr353, Ala369–Val395, Ala417–His439, and Phe517–Val535. [4Fe-4S] cluster is bound by residues Cys559 and Cys568. Helical transmembrane passes span Ala575 to Trp596 and Leu643 to Ile665. Chlorophyll a contacts are provided by His654, Met662, and Tyr670. Trp671 contributes to the phylloquinone binding site. The chain crosses the membrane as a helical span at residues Leu707–Ala727.

It belongs to the PsaA/PsaB family. The PsaA/B heterodimer binds the P700 chlorophyll special pair and subsequent electron acceptors. PSI consists of a core antenna complex that captures photons, and an electron transfer chain that converts photonic excitation into a charge separation. The eukaryotic PSI reaction center is composed of at least 11 subunits. P700 is a chlorophyll a/chlorophyll a' dimer, A0 is one or more chlorophyll a, A1 is one or both phylloquinones and FX is a shared 4Fe-4S iron-sulfur center. serves as cofactor.

It localises to the plastid. The protein resides in the chloroplast thylakoid membrane. The catalysed reaction is reduced [plastocyanin] + hnu + oxidized [2Fe-2S]-[ferredoxin] = oxidized [plastocyanin] + reduced [2Fe-2S]-[ferredoxin]. Functionally, psaA and PsaB bind P700, the primary electron donor of photosystem I (PSI), as well as the electron acceptors A0, A1 and FX. PSI is a plastocyanin/cytochrome c6-ferredoxin oxidoreductase, converting photonic excitation into a charge separation, which transfers an electron from the donor P700 chlorophyll pair to the spectroscopically characterized acceptors A0, A1, FX, FA and FB in turn. Oxidized P700 is reduced on the lumenal side of the thylakoid membrane by plastocyanin or cytochrome c6. This is Photosystem I P700 chlorophyll a apoprotein A2 from Chlorella vulgaris (Green alga).